A 670-amino-acid chain; its full sequence is UvrABC system protein B (670 aa).

The Helicase ATP-binding domain occupies 26–414 (EGLEDGLAHQ…GGDVIDQVVR (389 aa)). 39–46 (GVTGSGKT) serves as a coordination point for ATP. The Beta-hairpin signature appears at 92–115 (YYDYYQPEAYVPSSDTFIEKDASV). The Helicase C-terminal domain occupies 431-597 (QVDDLLSEIR…GINKKISDIL (167 aa)). One can recognise a UVR domain in the interval 630 to 665 (ELKIRELESKMLTHAQNLEFEEAAALRDEVQVLRAQ).

Belongs to the UvrB family. In terms of assembly, forms a heterotetramer with UvrA during the search for lesions. Interacts with UvrC in an incision complex.

The protein resides in the cytoplasm. The UvrABC repair system catalyzes the recognition and processing of DNA lesions. A damage recognition complex composed of 2 UvrA and 2 UvrB subunits scans DNA for abnormalities. Upon binding of the UvrA(2)B(2) complex to a putative damaged site, the DNA wraps around one UvrB monomer. DNA wrap is dependent on ATP binding by UvrB and probably causes local melting of the DNA helix, facilitating insertion of UvrB beta-hairpin between the DNA strands. Then UvrB probes one DNA strand for the presence of a lesion. If a lesion is found the UvrA subunits dissociate and the UvrB-DNA preincision complex is formed. This complex is subsequently bound by UvrC and the second UvrB is released. If no lesion is found, the DNA wraps around the other UvrB subunit that will check the other stand for damage. This is UvrABC system protein B from Pectobacterium atrosepticum (strain SCRI 1043 / ATCC BAA-672) (Erwinia carotovora subsp. atroseptica).